We begin with the raw amino-acid sequence, 441 residues long: MRNAIATVLLGLAMLLPVGAVQAQDGPLRIEITDGVIEPLPFAVPDFIADTPAAAQYATDIARVIAQDLVGSGLFREIPKVAYISPYTDFDAEVNFTDWKAINAQALIAGAVSLSGDRITVRFRGYDVFAGQELGAGLQLSGTTDGWRRIAHKVADTIYSRLTGEGGYFDSRVVFVSETGPKNDRKKRLAIMDYDGANVQYLTNSDAIVLAPRFSPTGDRVLYTSYESGFPQIHVLDVGRVQRRVLSAGNGSMSFAPRFAPNGQTIVYSQSQGGNTDLFSMDINSGNPQRLTSAPSIETAPSFSPDGSQIVFESDRSGTSQLYVMSASGGEAKRISFGQGRYGTPVWSPRGDYIAFTKQNAGRFHIGVMRTDGSEERLLTASFLDEGPTWSPNGRVIMFTRETQGASGQARLYSVDISGRNLKPVKTPDGASDPSWSPLQN.

A signal peptide spans methionine 1–alanine 23. Residues arginine 420–asparagine 441 form a disordered region.

This sequence belongs to the TolB family. In terms of assembly, the Tol-Pal system is composed of five core proteins: the inner membrane proteins TolA, TolQ and TolR, the periplasmic protein TolB and the outer membrane protein Pal. They form a network linking the inner and outer membranes and the peptidoglycan layer.

The protein localises to the periplasm. In terms of biological role, part of the Tol-Pal system, which plays a role in outer membrane invagination during cell division and is important for maintaining outer membrane integrity. The sequence is that of Tol-Pal system protein TolB from Ruegeria sp. (strain TM1040) (Silicibacter sp.).